The following is a 417-amino-acid chain: Tyrosine--tRNA ligase (417 aa).

Tyr-39 contributes to the L-tyrosine binding site. The 'HIGH' region motif lies at 44-53 (CTARSLHIGN). Tyr-176 and Gln-180 together coordinate L-tyrosine. A 'KMSKS' region motif is present at residues 236 to 240 (KMGKT). Residue Lys-239 coordinates ATP. Positions 350-417 (FGVLNAFVKA…KKKHILIKPA (68 aa)) constitute an S4 RNA-binding domain.

Belongs to the class-I aminoacyl-tRNA synthetase family. TyrS type 1 subfamily. In terms of assembly, homodimer.

The protein resides in the cytoplasm. It catalyses the reaction tRNA(Tyr) + L-tyrosine + ATP = L-tyrosyl-tRNA(Tyr) + AMP + diphosphate + H(+). Its function is as follows. Catalyzes the attachment of tyrosine to tRNA(Tyr) in a two-step reaction: tyrosine is first activated by ATP to form Tyr-AMP and then transferred to the acceptor end of tRNA(Tyr). The polypeptide is Tyrosine--tRNA ligase (Bradyrhizobium diazoefficiens (strain JCM 10833 / BCRC 13528 / IAM 13628 / NBRC 14792 / USDA 110)).